The primary structure comprises 232 residues: 5'-methylthioadenosine/S-adenosylhomocysteine nucleosidase (232 aa).

The active-site Proton acceptor is E12. Substrate-binding positions include G78, M153, and 174 to 175 (ME). D198 serves as the catalytic Proton donor.

The protein belongs to the PNP/UDP phosphorylase family. MtnN subfamily.

It carries out the reaction S-adenosyl-L-homocysteine + H2O = S-(5-deoxy-D-ribos-5-yl)-L-homocysteine + adenine. It catalyses the reaction S-methyl-5'-thioadenosine + H2O = 5-(methylsulfanyl)-D-ribose + adenine. The enzyme catalyses 5'-deoxyadenosine + H2O = 5-deoxy-D-ribose + adenine. It functions in the pathway amino-acid biosynthesis; L-methionine biosynthesis via salvage pathway; S-methyl-5-thio-alpha-D-ribose 1-phosphate from S-methyl-5'-thioadenosine (hydrolase route): step 1/2. Its function is as follows. Catalyzes the irreversible cleavage of the glycosidic bond in both 5'-methylthioadenosine (MTA) and S-adenosylhomocysteine (SAH/AdoHcy) to adenine and the corresponding thioribose, 5'-methylthioribose and S-ribosylhomocysteine, respectively. Also cleaves 5'-deoxyadenosine, a toxic by-product of radical S-adenosylmethionine (SAM) enzymes, into 5-deoxyribose and adenine. In Hydrogenovibrio crunogenus (strain DSM 25203 / XCL-2) (Thiomicrospira crunogena), this protein is 5'-methylthioadenosine/S-adenosylhomocysteine nucleosidase.